The chain runs to 119 residues: NADH-quinone oxidoreductase subunit A (119 aa).

A run of 3 helical transmembrane segments spans residues 7 to 27, 63 to 83, and 88 to 108; these read YPVL…VSIG, LVAI…PWGV, and IGWP…LGFA.

This sequence belongs to the complex I subunit 3 family. As to quaternary structure, NDH-1 is composed of 14 different subunits. Subunits NuoA, H, J, K, L, M, N constitute the membrane sector of the complex.

It localises to the cell inner membrane. The catalysed reaction is a quinone + NADH + 5 H(+)(in) = a quinol + NAD(+) + 4 H(+)(out). Its function is as follows. NDH-1 shuttles electrons from NADH, via FMN and iron-sulfur (Fe-S) centers, to quinones in the respiratory chain. The immediate electron acceptor for the enzyme in this species is believed to be ubiquinone. Couples the redox reaction to proton translocation (for every two electrons transferred, four hydrogen ions are translocated across the cytoplasmic membrane), and thus conserves the redox energy in a proton gradient. The chain is NADH-quinone oxidoreductase subunit A from Burkholderia ambifaria (strain MC40-6).